The following is a 453-amino-acid chain: MKLGIVAFTLISFAAQALALVARENLPKPQNDPFYQPPDGWESKKVGTILRSRKVNINTLVKDNLKEAWQLLYRTTYRSDDEPTTTVTTIMVPHNAQNDSLVLYADFEDAGAPQCAPSYTWRAGLLSDTSSIFNVGIAMLYLQEGYIVTMPDKEGNKGAFGSGHVEGRQSLDGIRATLAFDKIGLNKNARVVGHGYSGGGIQCGWTAALKKSYAPEINSVGWFTGGTPSNVTALVEKINGGPFAGYVAGGLGGVISTYPDVKAYTDKVFTKQAQKDLEFPRKHCQEEITLHFLFKNFYDKSFSTVGKRFLYEPVVQKALNELTMGTNPDFTPDTPVLMAHGVSDEVAPYEAAHETYKSWCKNGADVEFVSFANPVSAHGVTTVTSTVPGFLWNRDRLQGKPVQGGCREIKNYDVGVNSHALGEDFESALGLLKGLLGDKIGPNDEYLKDALHK.

The signal sequence occupies residues Met-1–Ala-19. Asn-98 carries an N-linked (GlcNAc...) asparagine glycan. An intrachain disulfide couples Cys-115 to Cys-284. The active-site Nucleophile is Ser-197. Asn-230 carries N-linked (GlcNAc...) asparagine glycosylation. Active-site residues include Asp-344 and His-378. Cys-360 and Cys-406 are joined by a disulfide.

Belongs to the AB hydrolase superfamily. Lipase family. Class Lip subfamily.

It localises to the secreted. It is found in the cell wall. The catalysed reaction is a triacylglycerol + H2O = a diacylglycerol + a fatty acid + H(+). It catalyses the reaction a monoacylglycerol + H2O = glycerol + a fatty acid + H(+). The enzyme catalyses a diacylglycerol + H2O = a monoacylglycerol + a fatty acid + H(+). Secreted lipase involved in Dandruff and seborrheic dermatitis (D/SD) probably via lipase-mediated breakdown of sebaceous lipids and release of irritating free fatty acids. Has triacylglycerol lipase activity and is able to hydrolyze triolein, tristearin, trilinolein, tripalmitoylglycerol and trihexadecenoin. Hydrolyzes diacylglycerols such as distearin, dilinolein, dipalmitoylglycerol and dipalmitolein. Mostly converts monoolein to di- and triolein, while free fatty acids are only produced in low amounts. The polypeptide is Secreted triacylglycerol lipase LIP3 (Malassezia globosa (strain ATCC MYA-4612 / CBS 7966) (Dandruff-associated fungus)).